Here is a 185-residue protein sequence, read N- to C-terminus: Serine/arginine-rich splicing factor RSZ21 (185 aa).

The RRM domain maps to 2 to 73; that stretch reads ARLYVGNLDP…WRVELSRNSS (72 aa). A CCHC-type zinc finger spans residues 86–103; sequence MKCYECGETGHFARECRL. The disordered stretch occupies residues 104–185; sequence RIGPGGLGSG…DGGRYRRSRS (82 aa). A compositionally biased stretch (basic residues) spans 113-123; it reads GKRRSRSRSRS. 2 stretches are compositionally biased toward low complexity: residues 124 to 138 and 151 to 162; these read RSPQ…GRRS and VSPVRGRSYSRS.

This sequence belongs to the splicing factor SR family. Post-translationally, extensively phosphorylated on serine residues in the RS domain. In terms of tissue distribution, expressed in roots, leaves and immature seeds.

The protein localises to the nucleus. Involved in pre-mRNA splicing. In Oryza sativa subsp. japonica (Rice), this protein is Serine/arginine-rich splicing factor RSZ21 (RSZP21).